A 282-amino-acid chain; its full sequence is MEESQNGVKYGGDATDAKEYFTIQPRSLQNCDLKDIERKTKFAHLQNYRTNYPEMGMCLIINNKNFHSSNMAVRNGTDVDALKLHETFTGLGYEVMVCNDQKSSDIIGRLKKISEEDHSKRSSFVCAILSHGEEDGSICGVDVPIHIKNLTDLFRGDRCKTLVGKPKIFFIQACRGTELDSGIETDSCSEPREEIQRIPVEADFLYAYSTVPGYCSWRDKMDGSWFIQSLCKMIKLYGSHLELIQILTCVNHMVALDFETFHAKKQIPCVVSMLTKSFYFFK.

Active-site residues include His-131 and Cys-174.

The protein belongs to the peptidase C14A family. Heterotetramer that consists of two anti-parallel arranged heterodimers, each one formed by a 17 kDa (p17) and a 12 kDa (p12) subunit.

It is found in the cytoplasm. It carries out the reaction Strict requirement for an Asp residue at positions P1 and P4. It has a preferred cleavage sequence of Asp-Xaa-Xaa-Asp-|- with a hydrophobic amino-acid residue at P2 and a hydrophilic amino-acid residue at P3, although Val or Ala are also accepted at this position.. In terms of biological role, important mediator of apoptosis. At the onset of apoptosis, it proteolytically cleaves poly(ADP-ribose) polymerase PARP1 at a '216-Asp-|-Gly-217' bond. This is Caspase-3 (casp3) from Xenopus laevis (African clawed frog).